The primary structure comprises 630 residues: 1,4-alpha-glucan branching enzyme GlgB (630 aa).

The Nucleophile role is filled by Asp311. Glu362 acts as the Proton donor in catalysis.

It belongs to the glycosyl hydrolase 13 family. GlgB subfamily. Monomer.

It catalyses the reaction Transfers a segment of a (1-&gt;4)-alpha-D-glucan chain to a primary hydroxy group in a similar glucan chain.. Its pathway is glycan biosynthesis; glycogen biosynthesis. Its function is as follows. Catalyzes the formation of the alpha-1,6-glucosidic linkages in glycogen by scission of a 1,4-alpha-linked oligosaccharide from growing alpha-1,4-glucan chains and the subsequent attachment of the oligosaccharide to the alpha-1,6 position. In Aquifex aeolicus (strain VF5), this protein is 1,4-alpha-glucan branching enzyme GlgB.